Reading from the N-terminus, the 301-residue chain is Phosphoglycolate phosphatase 2 (301 aa).

The Nucleophile role is filled by Asp19.

This sequence belongs to the HAD-like hydrolase superfamily. CbbY/CbbZ/Gph/YieH family.

It carries out the reaction 2-phosphoglycolate + H2O = glycolate + phosphate. In terms of biological role, dephosphorylates 2-phosphoglycolate, but does not contribute to photorespiratory metabolism. The sequence is that of Phosphoglycolate phosphatase 2 (PGLP2) from Arabidopsis thaliana (Mouse-ear cress).